The primary structure comprises 271 residues: Bis(5'-nucleosyl)-tetraphosphatase, symmetrical (271 aa).

The protein belongs to the Ap4A hydrolase family.

The enzyme catalyses P(1),P(4)-bis(5'-adenosyl) tetraphosphate + H2O = 2 ADP + 2 H(+). Its function is as follows. Hydrolyzes diadenosine 5',5'''-P1,P4-tetraphosphate to yield ADP. This Aliivibrio fischeri (strain ATCC 700601 / ES114) (Vibrio fischeri) protein is Bis(5'-nucleosyl)-tetraphosphatase, symmetrical.